The chain runs to 209 residues: Small ribosomal subunit protein uS4 (209 aa).

Basic residues predominate over residues 1 to 13 (MSTKSRTRSKTRL). 2 disordered regions span residues 1–20 (MSTK…LGIP) and 28–49 (YLEK…QDSD). Residues 95–176 (QRLDALVVRS…PKLPSYLEVE (82 aa)) enclose the S4 RNA-binding domain.

This sequence belongs to the universal ribosomal protein uS4 family. In terms of assembly, part of the 30S ribosomal subunit. Contacts protein S5. The interaction surface between S4 and S5 is involved in control of translational fidelity.

Its function is as follows. One of the primary rRNA binding proteins, it binds directly to 16S rRNA where it nucleates assembly of the body of the 30S subunit. In terms of biological role, with S5 and S12 plays an important role in translational accuracy. This chain is Small ribosomal subunit protein uS4, found in Clavibacter michiganensis subsp. michiganensis (strain NCPPB 382).